Consider the following 488-residue polypeptide: Splicing factor U2AF 65 kDa subunit (488 aa).

2 stretches are compositionally biased toward basic and acidic residues: residues 25 to 55 and 78 to 129; these read LESL…DEDR and DRRD…KYRF. Residues 25–133 form a disordered region; that stretch reads LESLQEDVKP…PKKYRFWDVP (109 aa). RRM domains are found at residues 175 to 257, 282 to 359, and 389 to 479; these read RRLY…RPRD, NKIF…LACA, and EILC…YYDV.

This sequence belongs to the splicing factor SR family. As to quaternary structure, forms a heterodimer with the U2AF small subunit.

It is found in the nucleus. In terms of biological role, necessary for the splicing of pre-mRNA. Binds to the polypyrimidine tract of introns early during spliceosome assembly. The sequence is that of Splicing factor U2AF 65 kDa subunit (uaf-1) from Caenorhabditis briggsae.